The primary structure comprises 294 residues: ATP synthase gamma chain (294 aa).

This sequence belongs to the ATPase gamma chain family. In terms of assembly, F-type ATPases have 2 components, CF(1) - the catalytic core - and CF(0) - the membrane proton channel. CF(1) has five subunits: alpha(3), beta(3), gamma(1), delta(1), epsilon(1). CF(0) has three main subunits: a, b and c.

Its subcellular location is the cell inner membrane. Functionally, produces ATP from ADP in the presence of a proton gradient across the membrane. The gamma chain is believed to be important in regulating ATPase activity and the flow of protons through the CF(0) complex. This is ATP synthase gamma chain from Rhizorhabdus wittichii (strain DSM 6014 / CCUG 31198 / JCM 15750 / NBRC 105917 / EY 4224 / RW1) (Sphingomonas wittichii).